Consider the following 279-residue polypeptide: Small ribosomal subunit protein uS2 (279 aa).

The segment at 232-260 is disordered; the sequence is KVDMEAAGENAPKGAGKKKNTKARMDKAE.

The protein belongs to the universal ribosomal protein uS2 family.

The polypeptide is Small ribosomal subunit protein uS2 (Phocaeicola vulgatus (strain ATCC 8482 / DSM 1447 / JCM 5826 / CCUG 4940 / NBRC 14291 / NCTC 11154) (Bacteroides vulgatus)).